A 394-amino-acid polypeptide reads, in one-letter code: Phosphoglycerate kinase (394 aa).

Residues 21 to 23 (DFN), Arg-36, 59 to 62 (HMGR), Arg-118, and Arg-151 contribute to the substrate site. Residues Lys-202, Glu-324, and 350–353 (GGDS) contribute to the ATP site.

It belongs to the phosphoglycerate kinase family. As to quaternary structure, monomer.

It localises to the cytoplasm. The enzyme catalyses (2R)-3-phosphoglycerate + ATP = (2R)-3-phospho-glyceroyl phosphate + ADP. The protein operates within carbohydrate degradation; glycolysis; pyruvate from D-glyceraldehyde 3-phosphate: step 2/5. This Exiguobacterium sibiricum (strain DSM 17290 / CCUG 55495 / CIP 109462 / JCM 13490 / 255-15) protein is Phosphoglycerate kinase.